We begin with the raw amino-acid sequence, 118 residues long: Ribonuclease P protein component (118 aa).

Belongs to the RnpA family. In terms of assembly, consists of a catalytic RNA component (M1 or rnpB) and a protein subunit.

The catalysed reaction is Endonucleolytic cleavage of RNA, removing 5'-extranucleotides from tRNA precursor.. RNaseP catalyzes the removal of the 5'-leader sequence from pre-tRNA to produce the mature 5'-terminus. It can also cleave other RNA substrates such as 4.5S RNA. The protein component plays an auxiliary but essential role in vivo by binding to the 5'-leader sequence and broadening the substrate specificity of the ribozyme. The polypeptide is Ribonuclease P protein component (Vibrio parahaemolyticus serotype O3:K6 (strain RIMD 2210633)).